Reading from the N-terminus, the 570-residue chain is Proline--tRNA ligase (570 aa).

Belongs to the class-II aminoacyl-tRNA synthetase family. ProS type 1 subfamily. As to quaternary structure, homodimer.

The protein resides in the cytoplasm. The enzyme catalyses tRNA(Pro) + L-proline + ATP = L-prolyl-tRNA(Pro) + AMP + diphosphate. In terms of biological role, catalyzes the attachment of proline to tRNA(Pro) in a two-step reaction: proline is first activated by ATP to form Pro-AMP and then transferred to the acceptor end of tRNA(Pro). As ProRS can inadvertently accommodate and process non-cognate amino acids such as alanine and cysteine, to avoid such errors it has two additional distinct editing activities against alanine. One activity is designated as 'pretransfer' editing and involves the tRNA(Pro)-independent hydrolysis of activated Ala-AMP. The other activity is designated 'posttransfer' editing and involves deacylation of mischarged Ala-tRNA(Pro). The misacylated Cys-tRNA(Pro) is not edited by ProRS. In Shewanella sp. (strain ANA-3), this protein is Proline--tRNA ligase.